A 205-amino-acid polypeptide reads, in one-letter code: Guanylate kinase (205 aa).

A Guanylate kinase-like domain is found at 18–196 (PKLFTISAPA…AYQVLRSIFI (179 aa)). Residue 25-32 (APAGAGKT) participates in ATP binding.

Belongs to the guanylate kinase family.

It is found in the cytoplasm. It carries out the reaction GMP + ATP = GDP + ADP. Functionally, essential for recycling GMP and indirectly, cGMP. The chain is Guanylate kinase (gmk) from Chlamydia muridarum (strain MoPn / Nigg).